Reading from the N-terminus, the 277-residue chain is MEIIRTVAEMRAWRKQAGKLAFVPTMGNLHEGHLKLVAAARERAEKVVVSIFVNRLQFGQGEDFDAYPRTFDADCAKLAAAGVDALFFPSERELYPRVRQDFNVEPPHIQNELCGAFRPGHFRGVATVVTKLFNIVQPDLACFGKKDYQQLHVIQAMIADLNSPIEIVPVDTGRAGDGLALSSRNGYLSAEERAEAPRLYRNLSMIRDGLMAGSQDYAALEQAARDDLAAAGWTVDYVEVRQADTLEIAHAGEKRLVVLAAARLGKTRLIDNIEVFR.

26–33 (MGNLHEGH) contributes to the ATP binding site. Histidine 33 acts as the Proton donor in catalysis. Glutamine 57 serves as a coordination point for (R)-pantoate. Glutamine 57 is a beta-alanine binding site. ATP is bound at residue 144–147 (GKKD). Glutamine 150 is a (R)-pantoate binding site. Residues glycine 173 and 181–184 (LSSR) contribute to the ATP site.

The protein belongs to the pantothenate synthetase family. As to quaternary structure, homodimer.

The protein localises to the cytoplasm. The catalysed reaction is (R)-pantoate + beta-alanine + ATP = (R)-pantothenate + AMP + diphosphate + H(+). It functions in the pathway cofactor biosynthesis; (R)-pantothenate biosynthesis; (R)-pantothenate from (R)-pantoate and beta-alanine: step 1/1. Its function is as follows. Catalyzes the condensation of pantoate with beta-alanine in an ATP-dependent reaction via a pantoyl-adenylate intermediate. The protein is Pantothenate synthetase of Chromobacterium violaceum (strain ATCC 12472 / DSM 30191 / JCM 1249 / CCUG 213 / NBRC 12614 / NCIMB 9131 / NCTC 9757 / MK).